A 116-amino-acid chain; its full sequence is NADH-ubiquinone oxidoreductase chain 3 (116 aa).

Transmembrane regions (helical) follow at residues 4-24 (FMVM…LAFW), 56-76 (FFLV…LLPS), and 87-107 (FTLL…IYEW).

This sequence belongs to the complex I subunit 3 family.

It localises to the mitochondrion membrane. It carries out the reaction a ubiquinone + NADH + 5 H(+)(in) = a ubiquinol + NAD(+) + 4 H(+)(out). Core subunit of the mitochondrial membrane respiratory chain NADH dehydrogenase (Complex I) that is believed to belong to the minimal assembly required for catalysis. Complex I functions in the transfer of electrons from NADH to the respiratory chain. The immediate electron acceptor for the enzyme is believed to be ubiquinone. This Petromyzon marinus (Sea lamprey) protein is NADH-ubiquinone oxidoreductase chain 3 (MT-ND3).